The chain runs to 410 residues: Phosphoglycerate kinase (410 aa).

Residues 22-24 (DIN), Arg-39, 62-65 (HQSR), Arg-119, and Arg-159 contribute to the substrate site. Residues Glu-332 and 358 to 361 (GGHL) contribute to the ATP site.

Belongs to the phosphoglycerate kinase family. In terms of assembly, homodimer.

It localises to the cytoplasm. It catalyses the reaction (2R)-3-phosphoglycerate + ATP = (2R)-3-phospho-glyceroyl phosphate + ADP. The protein operates within carbohydrate degradation; glycolysis; pyruvate from D-glyceraldehyde 3-phosphate: step 2/5. This is Phosphoglycerate kinase (pgk) from Methanothermus fervidus (strain ATCC 43054 / DSM 2088 / JCM 10308 / V24 S).